The chain runs to 414 residues: Serine/threonine transporter SstT (414 aa).

The next 8 helical transmembrane spans lie at 16 to 36 (GSLV…AWIS), 46 to 66 (LGTL…LMLV), 84 to 104 (ILFL…VFSF), 143 to 163 (ALLN…GFAL), 180 to 200 (AVTF…FGLV), 219 to 239 (LVVL…LLVF), 300 to 320 (MAGA…TLGV), and 332 to 352 (VVAS…LLLI).

The protein belongs to the dicarboxylate/amino acid:cation symporter (DAACS) (TC 2.A.23) family.

The protein resides in the cell inner membrane. The enzyme catalyses L-serine(in) + Na(+)(in) = L-serine(out) + Na(+)(out). The catalysed reaction is L-threonine(in) + Na(+)(in) = L-threonine(out) + Na(+)(out). In terms of biological role, involved in the import of serine and threonine into the cell, with the concomitant import of sodium (symport system). This is Serine/threonine transporter SstT from Salmonella newport (strain SL254).